The following is a 292-amino-acid chain: GTP cyclohydrolase FolE2 (292 aa).

This sequence belongs to the GTP cyclohydrolase IV family.

The enzyme catalyses GTP + H2O = 7,8-dihydroneopterin 3'-triphosphate + formate + H(+). It functions in the pathway cofactor biosynthesis; 7,8-dihydroneopterin triphosphate biosynthesis; 7,8-dihydroneopterin triphosphate from GTP: step 1/1. Converts GTP to 7,8-dihydroneopterin triphosphate. In Staphylococcus haemolyticus (strain JCSC1435), this protein is GTP cyclohydrolase FolE2.